Reading from the N-terminus, the 268-residue chain is DNA repair protein RecO (268 aa).

The protein belongs to the RecO family.

Its function is as follows. Involved in DNA repair and RecF pathway recombination. The polypeptide is DNA repair protein RecO (Mycobacterium leprae (strain Br4923)).